Here is a 298-residue protein sequence, read N- to C-terminus: Acetyl-coenzyme A carboxylase carboxyl transferase subunit beta (298 aa).

The disordered stretch occupies residues 1-21; sequence MNQEVKSGKVLSPSTPWTQRP. Residues 41-298 enclose the CoA carboxyltransferase N-terminal domain; that stretch reads PTIECPECHA…RLVSKLMNLP (258 aa). 4 residues coordinate Zn(2+): cysteine 45, cysteine 48, cysteine 64, and cysteine 67. A C4-type zinc finger spans residues 45 to 67; that stretch reads CPECHALVTRTAISFNAYVCPQC.

It belongs to the AccD/PCCB family. As to quaternary structure, acetyl-CoA carboxylase is a heterohexamer composed of biotin carboxyl carrier protein (AccB), biotin carboxylase (AccC) and two subunits each of ACCase subunit alpha (AccA) and ACCase subunit beta (AccD). Requires Zn(2+) as cofactor.

The protein localises to the cytoplasm. It carries out the reaction N(6)-carboxybiotinyl-L-lysyl-[protein] + acetyl-CoA = N(6)-biotinyl-L-lysyl-[protein] + malonyl-CoA. The protein operates within lipid metabolism; malonyl-CoA biosynthesis; malonyl-CoA from acetyl-CoA: step 1/1. Component of the acetyl coenzyme A carboxylase (ACC) complex. Biotin carboxylase (BC) catalyzes the carboxylation of biotin on its carrier protein (BCCP) and then the CO(2) group is transferred by the transcarboxylase to acetyl-CoA to form malonyl-CoA. The sequence is that of Acetyl-coenzyme A carboxylase carboxyl transferase subunit beta from Acinetobacter baumannii (strain AYE).